The sequence spans 444 residues: Argininosuccinate synthase (444 aa).

Residues 18–26 and Ala-44 each bind ATP; that span reads AFSGGLDTS. Tyr-100 serves as a coordination point for L-citrulline. Positions 130 and 132 each coordinate ATP. The L-aspartate site is built by Thr-132, Asn-136, and Asp-137. Asn-136 serves as a coordination point for L-citrulline. Asp-137 contributes to the ATP binding site. Residues Arg-140 and Ser-193 each coordinate L-citrulline. ATP is bound at residue Asp-195. L-citrulline-binding residues include Thr-202, Glu-204, and Glu-281.

This sequence belongs to the argininosuccinate synthase family. Type 2 subfamily. As to quaternary structure, homotetramer.

The protein localises to the cytoplasm. The catalysed reaction is L-citrulline + L-aspartate + ATP = 2-(N(omega)-L-arginino)succinate + AMP + diphosphate + H(+). It functions in the pathway amino-acid biosynthesis; L-arginine biosynthesis; L-arginine from L-ornithine and carbamoyl phosphate: step 2/3. The protein is Argininosuccinate synthase of Histophilus somni (strain 129Pt) (Haemophilus somnus).